The following is a 480-amino-acid chain: Alpha-glucosidase (480 aa).

4–70 (VKIGIIGAGS…ADLKFEKTMN (67 aa)) contributes to the NAD(+) binding site. Asp119 and Asn153 together coordinate substrate. Residue Cys174 coordinates Mn(2+). The active-site Proton donor is His175. Position 203 (His203) interacts with Mn(2+). The Proton acceptor role is filled by Asp260.

This sequence belongs to the glycosyl hydrolase 4 family. Homodimer. The cofactor is NAD(+). It depends on Mn(2+) as a cofactor. Co(2+) is required as a cofactor. Requires Ni(2+) as cofactor.

It carries out the reaction Hydrolysis of terminal, non-reducing (1-&gt;4)-linked alpha-D-glucose residues with release of alpha-D-glucose.. Inhibited by Hg(2+) ion and EDTA. Alpha-glycosidase with a very broad specificity. Hydrolyzes maltose and other small maltooligosaccharides but is inactive against the polymeric substrate starch. AglA is not specific with respect to the configuration at the C-4 position of its substrates because glycosidic derivatives of D-galactose are also hydrolyzed. Does not cleave beta-glycosidic bonds. This Thermotoga maritima (strain ATCC 43589 / DSM 3109 / JCM 10099 / NBRC 100826 / MSB8) protein is Alpha-glucosidase (aglA).